Here is a 2799-residue protein sequence, read N- to C-terminus: E3 ubiquitin-protein ligase UBR5 (2799 aa).

Position 2 is an N-acetylthreonine (T2). Positions 77–88 (DRLELGKPDNND) are enriched in basic and acidic residues. The segment at 77–175 (DRLELGKPDN…DRGSGLLGSQ (99 aa)) is disordered. Residues 89–110 (GSKLNSNSGAGRTSRPGRTSDS) show a composition bias toward polar residues. Residue S110 is modified to Phosphoserine. The segment covering 135-144 (GVGGSGGGSS) has biased composition (gly residues). Residues 184–226 (VIPEELISQAQVVLQGKSRSVIIRELQRTNLDVNLAVNNLLSR) enclose the UBA domain. At S327 the chain carries Phosphoserine. Over residues 328 to 347 (FDNERGSTSKEGEPNLDKKN) the composition is skewed to basic and acidic residues. The disordered stretch occupies residues 328-352 (FDNERGSTSKEGEPNLDKKNTPVQS). Phosphoserine occurs at positions 352 and 578. Positions 579-648 (PESLKNMEKA…APKEEEKVNE (70 aa)) are disordered. Positions 583-604 (KNMEKASKTTEAKPESKQEPVK) are enriched in basic and acidic residues. S612 carries the phosphoserine modification. A compositionally biased stretch (low complexity) spans 614-628 (ASTCSDASSIASSAS). T637 is subject to Phosphothreonine. 3 positions are modified to phosphoserine: S808, S928, and S1018. Disordered stretches follow at residues 999 to 1031 (AGLG…PDPP) and 1052 to 1075 (TAAT…EPSV). The segment covering 1017–1031 (VSPPIAPPSWVPDPP) has biased composition (pro residues). Residues 1052-1073 (TAATGTGQGPSTSTIPGPSTEP) show a composition bias toward polar residues. Residues T1115 and T1135 each carry the phosphothreonine modification. Residues 1177–1245 (DTCSFTWTGA…EKCKCKTLIA (69 aa)) form a UBR-type zinc finger. Residues C1179, C1196, C1199, C1208, C1211, C1215, H1216, and H1219 each coordinate Zn(2+). S1227 is modified (phosphoserine). C1232, C1234, and C1240 together coordinate Zn(2+). The tract at residues 1299–1318 (REDRNRKTASPEDSDMPDHD) is disordered. S1308, S1355, S1375, and S1481 each carry phosphoserine. The segment at 1515 to 1740 (SVEPLPPRPS…PSSTSTPAAS (226 aa)) is disordered. A compositionally biased stretch (low complexity) spans 1524–1537 (SSDQSSSSSQSQSS). Positions 1538 to 1553 (YIIRNPQQRRISQSQP) are enriched in polar residues. A Phosphoserine modification is found at S1549. 2 stretches are compositionally biased toward acidic residues: residues 1559–1574 (EEQD…EVEV) and 1605–1614 (HDEDGSDMEL). A compositionally biased stretch (polar residues) spans 1629 to 1638 (NHSNQDNASG). 3 stretches are compositionally biased toward low complexity: residues 1641–1657 (SVVT…ASSV), 1668–1681 (SNDS…SSQS), and 1726–1740 (AAST…PAAS). A Phosphothreonine modification is found at T1736. The residue at position 1741 (S1741) is a Phosphoserine. Y1746 bears the Phosphotyrosine mark. The residue at position 1780 (S1780) is a Phosphoserine. Positions 1859–1890 (LASAGDPGHPNHPLHASQNSARRERMTAREEA) are disordered. Positions 1879–1890 (ARRERMTAREEA) are enriched in basic and acidic residues. The residue at position 1969 (T1969) is a Phosphothreonine. A disordered region spans residues 1984 to 2021 (GIDNEDSEHENDDDTNQSATLNDKDDDSLPAETGQNHP). A compositionally biased stretch (acidic residues) spans 1985–1998 (IDNEDSEHENDDDT). S1990, S2026, and S2028 each carry phosphoserine. T2030 carries the phosphothreonine modification. S2076 carries the phosphoserine modification. The tract at residues 2117–2142 (RQKKEGEEQPVLPEETESSKPGPSAH) is disordered. At T2213 the chain carries Phosphothreonine. A phosphoserine mark is found at S2241 and S2289. The interval 2323 to 2392 (HTSLMQRLRN…PSDDPEPLPA (70 aa)) is disordered. Basic and acidic residues-rich tracts occupy residues 2332–2348 (NRGE…EMRR) and 2356–2368 (SRRD…RRQL). The 78-residue stretch at 2377–2454 (PASEGNPSDD…AMELIIAHGR (78 aa)) folds into the PABC domain. Positions 2462–2799 (LDLGLVDSSE…AIKTKNFGFV (338 aa)) constitute an HECT domain. 3 positions are modified to phosphoserine: S2469, S2484, and S2486. Positions 2473 to 2493 (VQQENRKRHGSSRSVVDMDLD) are disordered. The active-site Glycyl thioester intermediate is the C2768.

This sequence belongs to the UBR5 family. As to quaternary structure, homotetramer; composed of a dimer of dimers. Associates with CDK9 and TFIIS/TCEA1 and forms a transcription regulatory complex made of CDK9, RNAP II, UBR5 and TFIIS/TCEA1 that can stimulate target gene transcription (e.g. gamma fibrinogen/FGG) by recruiting their promoters. Associates with the E3 ligase complex containing DYRK2, EDD/UBR5, DDB1 and DCAF1 proteins (EDVP complex). Binds TOPBP1. Interacts with PIH1D1. Interacts with CIB1. (Microbial infection) Interacts with human T-cell leukemia virus 1/HTLV-1 protein HBZ; this interaction modulates HBZ stability. In terms of tissue distribution, widely expressed. Most abundant in testis and expressed at high levels in brain, pituitary and kidney.

It is found in the nucleus. The protein localises to the cytoplasm. It catalyses the reaction S-ubiquitinyl-[E2 ubiquitin-conjugating enzyme]-L-cysteine + [acceptor protein]-L-lysine = [E2 ubiquitin-conjugating enzyme]-L-cysteine + N(6)-ubiquitinyl-[acceptor protein]-L-lysine.. It functions in the pathway protein modification; protein ubiquitination. E3 ubiquitin-protein ligase involved in different protein quality control pathways in the cytoplasm and nucleus. Mainly acts as a ubiquitin chain elongator that extends pre-ubiquitinated substrates. Component of the N-end rule pathway: ubiquitinates proteins bearing specific N-terminal residues that are destabilizing according to the N-end rule, leading to their degradation. Recognizes type-1 N-degrons, containing positively charged amino acids (Arg, Lys and His). Together with UBR4, part of a cytoplasm protein quality control pathway that prevents protein aggregation by catalyzing assembly of heterotypic 'Lys-11'-/'Lys-48'-linked branched ubiquitin chains on aggregated proteins, leading to substrate recognition by the segregase p97/VCP and degradation by the proteasome: UBR5 is probably branching multiple 'Lys-48'-linked chains of substrates initially modified with mixed conjugates by UBR4. Together with ITCH, catalyzes 'Lys-48'-/'Lys-63'-branched ubiquitination of TXNIP, leading to its degradation: UBR5 mediates branching of 'Lys-48'-linked chains of substrates initially modified with 'Lys-63'-linked conjugates by ITCH. Catalytic component of a nuclear protein quality control pathway that mediates ubiquitination and degradation of unpaired transcription factors (i.e. transcription factors that are not assembled into functional multiprotein complexes): specifically recognizes and binds degrons that are not accessible when transcription regulators are associated with their coactivators. Ubiquitinates various unpaired transcription regulator (MYC, SUPT4H1, SUPT5H, CDC20 and MCRS1), as well as ligand-bound nuclear receptors (ESR1, NR1H3, NR3C1, PGR, RARA, RXRA AND VDR) that are not associated with their nuclear receptor coactivators (NCOAs). Involved in maturation and/or transcriptional regulation of mRNA by mediating polyubiquitination and activation of CDK9. Also acts as a regulator of DNA damage response by acting as a suppressor of RNF168, an E3 ubiquitin-protein ligase that promotes accumulation of 'Lys-63'-linked histone H2A and H2AX at DNA damage sites, thereby acting as a guard against excessive spreading of ubiquitinated chromatin at damaged chromosomes. Regulates DNA topoisomerase II binding protein (TopBP1) in the DNA damage response. Ubiquitinates acetylated PCK1. Acts as a positive regulator of the canonical Wnt signaling pathway by mediating (1) ubiquitination and stabilization of CTNNB1, and (2) 'Lys-48'-linked ubiquitination and degradation of TLE3. Promotes disassembly of the mitotic checkpoint complex (MCC) from the APC/C complex by catalyzing ubiquitination of BUB1B, BUB3 and CDC20. Plays an essential role in extraembryonic development. Required for the maintenance of skeletal tissue homeostasis by acting as an inhibitor of hedgehog (HH) signaling. In Homo sapiens (Human), this protein is E3 ubiquitin-protein ligase UBR5 (UBR5).